We begin with the raw amino-acid sequence, 375 residues long: Putative ZDHHC-type palmitoyltransferase 8 (375 aa).

2 consecutive transmembrane segments (helical) span residues 4 to 24 (LFDF…TDFL) and 40 to 60 (VVGM…VSLW). A glycan (N-linked (GlcNAc...) asparagine) is linked at Asn-95. 3 helical membrane-spanning segments follow: residues 105-125 (ITFY…YYYY), 221-241 (FILF…LSFF), and 285-305 (YSFI…ILLF). The DHHC domain maps to 176–226 (VSDGKWSTINKPKSHHCRICKRCIDSMDHHCPFAANCIGINNHHYFILFIG). A glycan (N-linked (GlcNAc...) asparagine) is linked at Asn-343.

The protein belongs to the DHHC palmitoyltransferase family.

The protein localises to the membrane. The catalysed reaction is L-cysteinyl-[protein] + hexadecanoyl-CoA = S-hexadecanoyl-L-cysteinyl-[protein] + CoA. The chain is Putative ZDHHC-type palmitoyltransferase 8 from Dictyostelium discoideum (Social amoeba).